We begin with the raw amino-acid sequence, 295 residues long: UDP-N-acetylenolpyruvoylglucosamine reductase (295 aa).

The FAD-binding PCMH-type domain maps to 23-188 (KVGGPADFLA…ISAKFALKPG (166 aa)). The active site involves R167. The Proton donor role is filled by S217. E287 is a catalytic residue.

The protein belongs to the MurB family. The cofactor is FAD.

It localises to the cytoplasm. The catalysed reaction is UDP-N-acetyl-alpha-D-muramate + NADP(+) = UDP-N-acetyl-3-O-(1-carboxyvinyl)-alpha-D-glucosamine + NADPH + H(+). Its pathway is cell wall biogenesis; peptidoglycan biosynthesis. In terms of biological role, cell wall formation. This is UDP-N-acetylenolpyruvoylglucosamine reductase from Streptococcus pyogenes serotype M12 (strain MGAS9429).